The primary structure comprises 147 residues: Sec-independent protein translocase protein TatB (147 aa).

The helical transmembrane segment at 1 to 21 (MFDIGFWELVVIGVVALVVLG) threads the bilayer. A disordered region spans residues 114–147 (EPVAPISVATPDEEPTVIPAARAQPSAEQGEVKP).

Belongs to the TatB family. The Tat system comprises two distinct complexes: a TatABC complex, containing multiple copies of TatA, TatB and TatC subunits, and a separate TatA complex, containing only TatA subunits. Substrates initially bind to the TatABC complex, which probably triggers association of the separate TatA complex to form the active translocon.

Its subcellular location is the cell inner membrane. Its function is as follows. Part of the twin-arginine translocation (Tat) system that transports large folded proteins containing a characteristic twin-arginine motif in their signal peptide across membranes. Together with TatC, TatB is part of a receptor directly interacting with Tat signal peptides. TatB may form an oligomeric binding site that transiently accommodates folded Tat precursor proteins before their translocation. This chain is Sec-independent protein translocase protein TatB, found in Aeromonas hydrophila subsp. hydrophila (strain ATCC 7966 / DSM 30187 / BCRC 13018 / CCUG 14551 / JCM 1027 / KCTC 2358 / NCIMB 9240 / NCTC 8049).